We begin with the raw amino-acid sequence, 160 residues long: Ribosomal RNA large subunit methyltransferase H (160 aa).

Positions 76 and 108 each coordinate S-adenosyl-L-methionine.

The protein belongs to the RNA methyltransferase RlmH family. Homodimer.

It localises to the cytoplasm. It carries out the reaction pseudouridine(1915) in 23S rRNA + S-adenosyl-L-methionine = N(3)-methylpseudouridine(1915) in 23S rRNA + S-adenosyl-L-homocysteine + H(+). In terms of biological role, specifically methylates the pseudouridine at position 1915 (m3Psi1915) in 23S rRNA. This chain is Ribosomal RNA large subunit methyltransferase H, found in Bradyrhizobium sp. (strain BTAi1 / ATCC BAA-1182).